Reading from the N-terminus, the 54-residue chain is Califin-C (54 aa).

A disulfide bond links Cys-25 and Cys-53. Leu-36 is modified (leucine amide).

Belongs to the molluscan ELH family. In terms of assembly, this protein consists of a large 36-residue subunit, bound by a single disulfide-bond to a small 18-residue subunit.

The protein resides in the secreted. Functionally, injected in sexually mature animals califin C excites LB and LC cells of the abdominal ganglion and cause egg-laying. This is Califin-C from Aplysia californica (California sea hare).